Consider the following 299-residue polypeptide: uncharacterized protein (299 aa).

The segment at 1–38 is disordered; the sequence is MSLDSNSDTEFELVPKFQTQPTRGDAPKSPELEEVSTV.

This sequence belongs to the calycin superfamily. Fatty-acid binding protein (FABP) family.

This is an uncharacterized protein from Caenorhabditis elegans.